Consider the following 789-residue polypeptide: Disintegrin and metalloproteinase domain-containing protein 7 (789 aa).

An N-terminal signal peptide occupies residues 1 to 23; sequence MLTTGIFWMTVLISHIQERGIVG. A propeptide spanning residues 24–176 is cleaved from the precursor; that stretch reads VEGQELVHPK…NHSCVGLNFT (153 aa). At 24-667 the chain is on the extracellular side; the sequence is VEGQELVHPK…EWGEALNLTS (644 aa). N-linked (GlcNAc...) asparagine glycans are attached at residues N84, N167, and N174. One can recognise a Peptidase M12B domain in the interval 199–393; that stretch reads KFIELFVVAD…QKPACILNNP (195 aa). Intrachain disulfides connect C310/C388, C350/C372, C352/C357, and C459/C479. Positions 401–487 constitute a Disintegrin domain; the sequence is YPFCGNKKVD…ECPKDEFQAN (87 aa). N583, N628, and N664 each carry an N-linked (GlcNAc...) asparagine glycan. A helical transmembrane segment spans residues 668–689; it reads VSIMVIVLVMVIIGVGLVILLI. Residues 690-789 lie on the Cytoplasmic side of the membrane; sequence RYQKCIKMKQ…DTQSGCERLG (100 aa). Positions 764–789 are disordered; sequence RGIADPKQTDNVNLNLDTQSGCERLG. The span at 772–789 shows a compositional bias: polar residues; sequence TDNVNLNLDTQSGCERLG.

Interacts with ITM2B in sperm; the interaction increases following capacitation. Interacts with HSPA5 and CANX. As to expression, expressed in both the head and tails of sperm (at protein level). Expressed in the epididymis (at protein level). Abundantly expressed in the apical region of the proximal caput epididymal epithelium, with decreasing expression in the mid and distal caput epididymal epithelium.

Its subcellular location is the membrane. Functionally, required for normal male fertility via maintenance of epithelial cell morphology in the caput epididymis and subsequently correct epididymis lumen structure required for sperm development. Plays a role in sperm motility, flagella morphology and tyrosine phosphorylation during sperm capacitance. Plays a role in normal expression levels of HSPA5, ITM2B and ADAM2 in sperm both prior to and post-capacitation. This is a non catalytic metalloprotease-like protein. This Mus musculus (Mouse) protein is Disintegrin and metalloproteinase domain-containing protein 7.